A 466-amino-acid chain; its full sequence is Cysteine--tRNA ligase (466 aa).

C29 serves as a coordination point for Zn(2+). The 'HIGH' region motif lies at 31-41; sequence PTVYNYIHIGN. Residues C209, H234, and E238 each coordinate Zn(2+). Residues 266–270 carry the 'KMSKS' region motif; the sequence is KMSKS. K269 is an ATP binding site. S270 is subject to Phosphoserine.

Belongs to the class-I aminoacyl-tRNA synthetase family. As to quaternary structure, monomer. The cofactor is Zn(2+).

It localises to the cytoplasm. The catalysed reaction is tRNA(Cys) + L-cysteine + ATP = L-cysteinyl-tRNA(Cys) + AMP + diphosphate. In Halalkalibacterium halodurans (strain ATCC BAA-125 / DSM 18197 / FERM 7344 / JCM 9153 / C-125) (Bacillus halodurans), this protein is Cysteine--tRNA ligase (cysS).